Here is a 96-residue protein sequence, read N- to C-terminus: Aspartyl/glutamyl-tRNA(Asn/Gln) amidotransferase subunit C (96 aa).

This sequence belongs to the GatC family. Heterotrimer of A, B and C subunits.

The enzyme catalyses L-glutamyl-tRNA(Gln) + L-glutamine + ATP + H2O = L-glutaminyl-tRNA(Gln) + L-glutamate + ADP + phosphate + H(+). It carries out the reaction L-aspartyl-tRNA(Asn) + L-glutamine + ATP + H2O = L-asparaginyl-tRNA(Asn) + L-glutamate + ADP + phosphate + 2 H(+). Its function is as follows. Allows the formation of correctly charged Asn-tRNA(Asn) or Gln-tRNA(Gln) through the transamidation of misacylated Asp-tRNA(Asn) or Glu-tRNA(Gln) in organisms which lack either or both of asparaginyl-tRNA or glutaminyl-tRNA synthetases. The reaction takes place in the presence of glutamine and ATP through an activated phospho-Asp-tRNA(Asn) or phospho-Glu-tRNA(Gln). This chain is Aspartyl/glutamyl-tRNA(Asn/Gln) amidotransferase subunit C, found in Aliarcobacter butzleri (strain RM4018) (Arcobacter butzleri).